The primary structure comprises 151 residues: Large ribosomal subunit protein bL9 (151 aa).

The protein belongs to the bacterial ribosomal protein bL9 family.

Functionally, binds to the 23S rRNA. This Mycolicibacterium smegmatis (strain ATCC 700084 / mc(2)155) (Mycobacterium smegmatis) protein is Large ribosomal subunit protein bL9.